A 517-amino-acid chain; its full sequence is Cytochrome P450 monooxygenase stcB (517 aa).

Residue C461 coordinates heme.

The protein belongs to the cytochrome P450 family. It depends on heme as a cofactor.

The protein operates within mycotoxin biosynthesis; sterigmatocystin biosynthesis. Cytochrome P450 monooxygenase; part of the gene cluster that mediates the biosynthesis of sterigmatocystin (ST), a polyketide-derived furanocoumarin which is part of the most toxic and carcinogenic compounds among the known mycotoxins. The first step in the biosynthesis of sterigmatocystin is the production of hexanoate by the fatty acid synthase (FAS) units stcJ and stcK. The polyketide backbone is assembled by the non-reducing polyketide synthase stcA by condensation of the starter hexanoyl-CoA and 7 malonyl-CoA extender units followed by cyclization and release of norsolorinic acid. Norsolorinic acid is the first stable intermediate in the biosynthesis of sterigmatocystin and is converted into averantin (AVN) by the ketoreductase stcE which reduces the hexanoate ketone to an alcohol. Averantin is then oxidized into 5'-hydroxyaverantin (HAVN) by the cytochrome P450 monooxygenase stcF. 5'-hydroxyaverantin is further converted to 5'-oxyaverantin (OAVN) by the 5'-hydroxyaverantin dehydrogenase stcG. The next step is the conversion of OAVN into averufin (AVF) which is catalyzed by a yet to be identified enzyme. The cytochrome P450 monooxygenase stcB and the flavin-binding monooxygenase stcW are both required for the conversion of averufin to 1-hydroxyversicolorone. The esterase stcI probably catalyzes the formation of versiconal hemiacetal acetate from 1-hydroxyversicolorone. The oxydoreductase stcN then probably catalyzes the biosynthetic step from versiconal to versicolorin B (VERB). The next step is performed by the versicolorin B desaturase stcL to produce versicolorin A (VERA). The ketoreductase stcU and the cytochrome P450 monooxygenase stcS are involved in the conversion of versicolorin A to demethylsterigmatocystin. The Baeyer-Villiger oxidas stcQ and the reductase stcR might be involved in the biosynthetic step from versicolorin A to demethylsterigmatocystin. The final step in the biosynthesis of sterigmatocystin is the methylation of demethylsterigmatocystin catalyzed by the methyltransferase stcP. This chain is Cytochrome P450 monooxygenase stcB, found in Emericella nidulans (strain FGSC A4 / ATCC 38163 / CBS 112.46 / NRRL 194 / M139) (Aspergillus nidulans).